The following is a 324-amino-acid chain: Putative exosome complex exonuclease RRP42 (324 aa).

Belongs to the RNase PH family. In terms of assembly, component of the RNA exosome complex.

The protein localises to the nucleus. The protein resides in the nucleolus. It is found in the cytoplasm. In terms of biological role, non-catalytic component of the RNA exosome complex which has 3'-&gt;5' exoribonuclease activity and participates in a multitude of cellular RNA processing and degradation events. The sequence is that of Putative exosome complex exonuclease RRP42 (exosc7) from Dictyostelium discoideum (Social amoeba).